Here is a 378-residue protein sequence, read N- to C-terminus: Quinolinate synthase (378 aa).

Positions 59 and 80 each coordinate iminosuccinate. A [4Fe-4S] cluster-binding site is contributed by cysteine 125. Residues 151–153 and serine 168 each bind iminosuccinate; that span reads YAN. Residue cysteine 212 coordinates [4Fe-4S] cluster. Iminosuccinate contacts are provided by residues 238–240 and threonine 255; that span reads HPE. A [4Fe-4S] cluster-binding site is contributed by cysteine 309.

It belongs to the quinolinate synthase family. Type 1 subfamily. It depends on [4Fe-4S] cluster as a cofactor.

Its subcellular location is the cytoplasm. The enzyme catalyses iminosuccinate + dihydroxyacetone phosphate = quinolinate + phosphate + 2 H2O + H(+). It participates in cofactor biosynthesis; NAD(+) biosynthesis; quinolinate from iminoaspartate: step 1/1. Catalyzes the condensation of iminoaspartate with dihydroxyacetone phosphate to form quinolinate. This Burkholderia lata (strain ATCC 17760 / DSM 23089 / LMG 22485 / NCIMB 9086 / R18194 / 383) protein is Quinolinate synthase.